The following is a 275-amino-acid chain: tRNA-splicing endonuclease subunit SEN34 (275 aa).

Residues Tyr209, His217, and Lys250 contribute to the active site.

It belongs to the tRNA-intron endonuclease family. In terms of assembly, heterotetramer composed of SEN2, SEN15, SEN34 and SEN54. Interacts directly with SEN15.

The protein localises to the nucleus. Its subcellular location is the endomembrane system. It is found in the mitochondrion outer membrane. It carries out the reaction pretRNA = a 3'-half-tRNA molecule with a 5'-OH end + a 5'-half-tRNA molecule with a 2',3'-cyclic phosphate end + an intron with a 2',3'-cyclic phosphate and a 5'-hydroxyl terminus.. In terms of biological role, constitutes one of the two catalytic subunit of the tRNA-splicing endonuclease complex, a complex responsible for identification and cleavage of the splice sites in pre-tRNA. It cleaves pre-tRNA at the 5'- and 3'-splice sites to release the intron. The products are an intron and two tRNA half-molecules bearing 2',3'-cyclic phosphate and 5'-OH termini. There are no conserved sequences at the splice sites, but the intron is invariably located at the same site in the gene, placing the splice sites an invariant distance from the constant structural features of the tRNA body. It probably carries the active site for 3'-splice site cleavage. In Saccharomyces cerevisiae (strain ATCC 204508 / S288c) (Baker's yeast), this protein is tRNA-splicing endonuclease subunit SEN34 (SEN34).